Reading from the N-terminus, the 194-residue chain is CASP-like protein 2C2 (194 aa).

At 1 to 27 the chain is on the cytoplasmic side; sequence MAAGQPRPPPPPSSVRTERVLRAACAA. A helical transmembrane segment spans residues 28–48; sequence MAAAGALLLGFSAETKTVIFV. Residues 49–58 lie on the Extracellular side of the membrane; sequence QKKAVPKDVQ. Residues 59 to 79 traverse the membrane as a helical segment; that stretch reads ALWVLIVAAAAAAAYHAAQLA. The Cytoplasmic portion of the chain corresponds to 80 to 113; the sequence is RCLCMDRLAGGGGGCRRLRRAVACATFLLDKGCA. Residues 114–134 form a helical membrane-spanning segment; that stretch reads YMVLATTVAALQACFVGLLGV. Residues 135 to 152 are Extracellular-facing; the sequence is EALQWSKLCNIYTRFCEQ. A helical membrane pass occupies residues 153–173; it reads AAAGMVCSLVAAAGMAVLSAF. The Cytoplasmic segment spans residues 174–194; that stretch reads SARDLFRRRRPCSPCVQVQQV.

The protein belongs to the Casparian strip membrane proteins (CASP) family. As to quaternary structure, homodimer and heterodimers.

It localises to the cell membrane. The chain is CASP-like protein 2C2 from Sorghum bicolor (Sorghum).